The primary structure comprises 632 residues: Probable potassium transport system protein Kup (632 aa).

The next 12 helical transmembrane spans lie at 17-37 (LFYL…TSPL), 60-80 (LISL…VLFL), 106-126 (TAIL…DAMI), 146-166 (LSEY…VVQS), 175-195 (FFGP…ISHI), 210-230 (AVSF…AVFL), 254-274 (WFLL…ALVL), 292-312 (ALLP…QAVI), 344-364 (IFVP…VLSF), 370-390 (LATA…IMAF), 401-421 (LPVA…FLGA), and 426-446 (IHDG…IMWT).

The protein belongs to the HAK/KUP transporter (TC 2.A.72) family.

It localises to the cell inner membrane. The enzyme catalyses K(+)(in) + H(+)(in) = K(+)(out) + H(+)(out). In terms of biological role, transport of potassium into the cell. Likely operates as a K(+):H(+) symporter. This chain is Probable potassium transport system protein Kup, found in Rhizobium rhizogenes (Agrobacterium rhizogenes).